The primary structure comprises 256 residues: Tetraspanin-32 (256 aa).

4 helical membrane-spanning segments follow: residues Leu15 to Ile35, Ala61 to Ile81, Leu90 to Phe110, and Cys203 to Ile223.

The protein belongs to the tetraspanin (TM4SF) family. In terms of tissue distribution, expressed exclusively in hematopoietic tissues. Expression detected in spleen, thymus, bone marrow and peripheral blood leukocytes but not in heart, brain, lung, liver, kidney or testis.

The protein localises to the membrane. The sequence is that of Tetraspanin-32 (Tspan32) from Mus musculus (Mouse).